A 695-amino-acid chain; its full sequence is Elongation factor G (695 aa).

Residues 10–289 (KNLRNIGIMA…AVVAWMPSPL (280 aa)) form the tr-type G domain. GTP is bound by residues 19–26 (AHIDAGKT), 83–87 (DTPGH), and 137–140 (NKMD).

Belongs to the TRAFAC class translation factor GTPase superfamily. Classic translation factor GTPase family. EF-G/EF-2 subfamily.

Its subcellular location is the cytoplasm. Functionally, catalyzes the GTP-dependent ribosomal translocation step during translation elongation. During this step, the ribosome changes from the pre-translocational (PRE) to the post-translocational (POST) state as the newly formed A-site-bound peptidyl-tRNA and P-site-bound deacylated tRNA move to the P and E sites, respectively. Catalyzes the coordinated movement of the two tRNA molecules, the mRNA and conformational changes in the ribosome. This Protochlamydia amoebophila (strain UWE25) protein is Elongation factor G.